We begin with the raw amino-acid sequence, 354 residues long: MREILEDICCSEVRVVVGEGSLSKLSKIKDNNAAVIYSRKISIADKINKYLPNAYFIPINDGESTKELSSVISLVEKLFEKNFDRGDYIIGVGGGTVTDVAGFLASIYLRGLNLINVPTTFLGMVDAAIGGKNGVNFNNIKNLIGTFYQPSMIISDLEFLETLPIEELKKGLAEVIKYGLTLDKELYDYLSLNKEKILNKDKQALEDIIFRSTLDKLSIVKEDERETKGIRIVLNFGHTIGHAIEAGSSFNVPHGYAISVGMVCEAKMAEELGYAEEGVVEDVLWLLQIYGLPYDISQIDAPVDLKLALNAINMDKKHRKDVILIPFPTRIGSWKKVEVPLDTVKGFAEQCLKK.

Residues 61-66 (DGESTK), 119-120 (TT), K132, K141, and 159-162 (FLET) each bind NAD(+). The Zn(2+) site is built by E174, H238, and H254.

Belongs to the sugar phosphate cyclases superfamily. Dehydroquinate synthase family. The cofactor is NAD(+). Co(2+) serves as cofactor. Requires Zn(2+) as cofactor.

It is found in the cytoplasm. It carries out the reaction 7-phospho-2-dehydro-3-deoxy-D-arabino-heptonate = 3-dehydroquinate + phosphate. Its pathway is metabolic intermediate biosynthesis; chorismate biosynthesis; chorismate from D-erythrose 4-phosphate and phosphoenolpyruvate: step 2/7. Functionally, catalyzes the conversion of 3-deoxy-D-arabino-heptulosonate 7-phosphate (DAHP) to dehydroquinate (DHQ). This chain is 3-dehydroquinate synthase, found in Saccharolobus solfataricus (strain ATCC 35092 / DSM 1617 / JCM 11322 / P2) (Sulfolobus solfataricus).